The following is a 121-amino-acid chain: Prefoldin subunit beta (121 aa).

Belongs to the prefoldin subunit beta family. Heterohexamer of two alpha and four beta subunits.

The protein localises to the cytoplasm. Molecular chaperone capable of stabilizing a range of proteins. Seems to fulfill an ATP-independent, HSP70-like function in archaeal de novo protein folding. The polypeptide is Prefoldin subunit beta (Methanoculleus marisnigri (strain ATCC 35101 / DSM 1498 / JR1)).